Consider the following 494-residue polypeptide: Rhamnulokinase (494 aa).

18–22 (ASSGR) is an ATP binding site. Residues G87 and 242–244 (HDT) contribute to the substrate site. D243 serves as the catalytic Proton acceptor. T265 provides a ligand contact to ATP. Substrate is bound at residue N302. ATP is bound at residue Q310. C360 and C377 form a disulfide bridge. G411 contributes to the ATP binding site.

It belongs to the rhamnulokinase family. Mg(2+) is required as a cofactor.

The enzyme catalyses L-rhamnulose + ATP = L-rhamnulose 1-phosphate + ADP + H(+). Its pathway is carbohydrate degradation; L-rhamnose degradation; glycerone phosphate from L-rhamnose: step 2/3. Involved in the catabolism of L-rhamnose (6-deoxy-L-mannose). Catalyzes the transfer of the gamma-phosphate group from ATP to the 1-hydroxyl group of L-rhamnulose to yield L-rhamnulose 1-phosphate. The chain is Rhamnulokinase from Enterococcus faecalis (strain ATCC 700802 / V583).